A 611-amino-acid polypeptide reads, in one-letter code: Protein Spindly-A (611 aa).

Residues 1–390 (MEESETVLKL…KENEKIKDEL (390 aa)) are a coiled coil. A disordered region spans residues 487-611 (TCTAESTDGR…PNATTQCPQQ (125 aa)). The segment covering 493-511 (TDGRIHSKEDLSLSTKEQD) has biased composition (basic and acidic residues). Positions 552-567 (HNCSVTSASPRSTSED) are enriched in polar residues. A compositionally biased stretch (basic and acidic residues) spans 570 to 583 (SESKRFDEEQEKRK). A compositionally biased stretch (polar residues) spans 602–611 (PNATTQCPQQ).

The protein belongs to the Spindly family.

It is found in the chromosome. It localises to the centromere. The protein resides in the kinetochore. Required for the localization of dynein and dynactin to the mitotic kintochore. Dynein is believed to control the initial lateral interaction between the kinetochore and spindle microtubules and to facilitate the subsequent formation of end-on kinetochore-microtubule attachments mediated by the NDC80 complex. In Xenopus laevis (African clawed frog), this protein is Protein Spindly-A (spdl1-a).